Here is a 202-residue protein sequence, read N- to C-terminus: Large ribosomal subunit protein bL17 (202 aa).

Residues D132–K202 form a disordered region. Residues A134–T168 show a composition bias toward low complexity. Residues A169 to T193 show a composition bias toward acidic residues.

The protein belongs to the bacterial ribosomal protein bL17 family. In terms of assembly, part of the 50S ribosomal subunit. Contacts protein L32.

The polypeptide is Large ribosomal subunit protein bL17 (Mycolicibacterium vanbaalenii (strain DSM 7251 / JCM 13017 / BCRC 16820 / KCTC 9966 / NRRL B-24157 / PYR-1) (Mycobacterium vanbaalenii)).